Consider the following 358-residue polypeptide: HLA class I histocompatibility antigen, alpha chain E (358 aa).

The signal sequence occupies residues 1-21 (MVDGTLLLLLSEALALTQTWA). An alpha-1 region spans residues 22 to 111 (GSHSLKYFHT…LRGYYNQSEA (90 aa)). Topologically, residues 22 to 305 (GSHSLKYFHT…KPASQPTIPI (284 aa)) are extracellular. Residues Tyr-28, Glu-84, Ser-87, Asn-98, and Tyr-105 each contribute to the a peptide antigen site. N-linked (GlcNAc...) asparagine glycosylation occurs at Asn-107. Residues 112 to 203 (GSHTLQWMHG…EKGKETLLHL (92 aa)) are alpha-2. A disulfide bridge connects residues Cys-122 and Cys-185. 5 residues coordinate a peptide antigen: Ser-164, Lys-167, Gln-177, Tyr-180, and Tyr-192. The interval 204–295 (EPPKTHVTHH…GLPEPVTLRW (92 aa)) is alpha-3. The region spanning 206–294 (PKTHVTHHPI…EGLPEPVTLR (89 aa)) is the Ig-like C1-type domain. Cys-224 and Cys-280 are joined by a disulfide. Positions 296–305 (KPASQPTIPI) are connecting peptide. A helical membrane pass occupies residues 306-329 (VGIIAGLVLLGSVVSGAVVAAVIW). Over 330-358 (RKKSSGGKGGSYSKAEWSDSAQGSESHSL) the chain is Cytoplasmic. Residues 333 to 358 (SSGGKGGSYSKAEWSDSAQGSESHSL) form a disordered region. The span at 348-358 (DSAQGSESHSL) shows a compositional bias: polar residues. Residue Ser-353 is modified to Phosphoserine.

This sequence belongs to the MHC class I family. Forms a heterotrimer with B2M and a self- or a pathogen-derived peptide (peptide-bound HLA-E-B2M). Similarly to MHC class Ia assembly, HLA-E-B2M heterodimer interacts with components of the antigen processing machinery TAPBP and TAP1-TAP2 complex; this interaction is required for peptide loading and translocation to the cell surface. Interacts with CALCR; this interaction is required for appropriate folding. The optimum binding peptide is a nonamer (VL9) that is primarily derived from amino-acid residues 3-11 of the signal sequences of most HLA-A, -B, -C and -G molecules. The VL9 peptide anchors to five main sites in the peptide-binding groove of HLA-E. Peptide-bound HLA-E-B2M complex interacts with KLRD1-KLRC1 receptor on NK cells. Binds with lower affinity to activating KLRD1-KLRC2. The common subunit KLRC1 plays a prominent role in directly interacting with HLA-E. Peptide-bound HLA-E-B2M interacts with the alpha-beta TCR on unconventional CD8+ T cells. Peptide-free HLA-E interacts with HLA-F-B2M complex; this interaction may regulate the intracellular trafficking and the stability of peptide-free MHC class I open conformers (OCs). Post-translationally, N-glycosylated. The soluble form (sHLA-E) can be partly produced by proteolytic cleavage at the cell surface (shedding) by a matrix metalloproteinase. Alternative splicing is also suggested as a mechanism for generation of sHLA-E, although it remains to be proved. As to expression, expressed in secretory endometrial cells during pregnancy (at protein level). The expression in nonlymphoid tissues is restricted to endothelial cells from all types of vessels, including arteries, veins, capillaries, and lymphatics (at protein level). In lymphoid organs, it is mainly expressed in endothelial venules, B and T cells, monocytes, macrophages, NK cells and megakaryocytes (at protein level).

The protein resides in the cell membrane. It is found in the golgi apparatus membrane. Its subcellular location is the secreted. Its function is as follows. Non-classical major histocompatibility class Ib molecule involved in immune self-nonself discrimination. In complex with B2M/beta-2-microglobulin binds nonamer self-peptides derived from the signal sequence of classical MHC class Ia molecules (VL9 peptides - VMAPRT[V/L][L/V/I/F]L). Peptide-bound HLA-E-B2M heterotrimeric complex primarily functions as a ligand for natural killer (NK) cell inhibitory receptor KLRD1-KLRC1, enabling NK cells to monitor the expression of other MHC class I molecules in healthy cells and to tolerate self. Upon cellular stress, preferentially binds signal sequence-derived peptides from stress-induced chaperones and is no longer recognized by NK cell inhibitory receptor KLRD1-KLRC1, resulting in impaired protection from NK cells. Binds signal sequence-derived peptides from non-classical MHC class Ib HLA-G molecules and acts as a ligand for NK cell activating receptor KLRD1-KLRC2, likely playing a role in the generation and effector functions of adaptive NK cells and in maternal-fetal tolerance during pregnancy. Besides self-peptides, can also bind and present pathogen-derived peptides conformationally similar to VL9 peptides to alpha-beta T cell receptor (TCR) on unconventional CD8-positive cytotoxic T cells, ultimately triggering antimicrobial immune response. Presents HIV gag peptides (immunodominant KAFSPEVIPMF and subdominant KALGPAATL epitopes) predominantly to CD8-positive T cell clones expressing a TRAV17-containing TCR, triggering HLA-E-restricted T cell responses. Presents mycobacterial peptides to HLA-E-restricted CD8-positive T cells eliciting both cytotoxic and immunoregulatory functions. In terms of biological role, (Microbial infection) Viruses like human cytomegalovirus have evolved an escape mechanism whereby virus-induced down-regulation of host MHC class I molecules is coupled to the binding of viral peptides to HLA-E, restoring HLA-E expression and inducing HLA-E-dependent NK cell immune tolerance to infected cells. Functionally, (Microbial infection) May bind HIV-1 gag/Capsid protein p24-derived peptide (AISPRTLNA) on infected cells and may inhibit NK cell cytotoxicity, a mechanism that allows HIV-1 to escape immune recognition. (Microbial infection) Upon SARS-CoV-2 infection, may contribute to functional exhaustion of cytotoxic NK cells and CD8-positive T cells. Binds SARS-CoV-2 S/Spike protein S1-derived peptide (LQPRTFLL) expressed on the surface of lung epithelial cells, inducing NK cell exhaustion and dampening of antiviral immune surveillance. This chain is HLA class I histocompatibility antigen, alpha chain E, found in Homo sapiens (Human).